A 248-amino-acid polypeptide reads, in one-letter code: Probable transcriptional regulatory protein RHECIAT_CH0003714 (248 aa).

Belongs to the TACO1 family.

The protein localises to the cytoplasm. The sequence is that of Probable transcriptional regulatory protein RHECIAT_CH0003714 from Rhizobium etli (strain CIAT 652).